A 431-amino-acid chain; its full sequence is MPTHTRSAELFEKAKKFIPGGVNSPVRAFKSVGGNPIFMAKGQGAYMTDVDGNTYLDYVGSWGPFILGSMHPRITAALEHTLTKIGTSFGTPIEMEIEIAELLTKIVPSIEMVRMVNSGTEATMSAVRLARGCTGRDKIIKFEGCYHGHGDSFLIKAGSGALTLGAPDSPGVTKGTAEDTLNAKYNDIKSVELLVAENKGNIAAIIIEPVAGNTGVIPAKKEFLQALRDLCDREGIVLIFDEVMCGFRVALGGAQELYGITPDLTTMGKIIGGGLPVGAFGGKRSLMENVAPLGGVYQAGTLSGNPLALTAGIETLKILMEENPYPELDRKGAFLEAGFRDNMQKLGLNFVQNRVGSMACLFFTETPVESYDSAITADTEKFGKYFSSMLEQGIYLAPSQFEAMFTSTMHTDADLEKTVKANYVALQAATK.

At Lys-269 the chain carries N6-(pyridoxal phosphate)lysine.

It belongs to the class-III pyridoxal-phosphate-dependent aminotransferase family. HemL subfamily. In terms of assembly, homodimer. The cofactor is pyridoxal 5'-phosphate.

The protein resides in the cytoplasm. The enzyme catalyses (S)-4-amino-5-oxopentanoate = 5-aminolevulinate. Its pathway is porphyrin-containing compound metabolism; protoporphyrin-IX biosynthesis; 5-aminolevulinate from L-glutamyl-tRNA(Glu): step 2/2. The protein operates within porphyrin-containing compound metabolism; chlorophyll biosynthesis. The sequence is that of Glutamate-1-semialdehyde 2,1-aminomutase from Chlorobium luteolum (strain DSM 273 / BCRC 81028 / 2530) (Pelodictyon luteolum).